The following is a 174-amino-acid chain: Nucleoside-triphosphatase THEP1 (174 aa).

Residues 7-14 and 94-101 contribute to the ATP site; these read GRPGVGKT and LIIVDEIG.

The protein belongs to the THEP1 NTPase family.

It catalyses the reaction a ribonucleoside 5'-triphosphate + H2O = a ribonucleoside 5'-diphosphate + phosphate + H(+). Its function is as follows. Has nucleotide phosphatase activity towards ATP, GTP, CTP, TTP and UTP. May hydrolyze nucleoside diphosphates with lower efficiency. This chain is Nucleoside-triphosphatase THEP1, found in Thermotoga maritima (strain ATCC 43589 / DSM 3109 / JCM 10099 / NBRC 100826 / MSB8).